The following is a 428-amino-acid chain: Type II methyltransferase M.TthHB8I (428 aa).

The interval 407-428 (RKGNTERRKHGPYTSPESAGSF) is disordered.

It belongs to the N(4)/N(6)-methyltransferase family.

It catalyses the reaction a 2'-deoxyadenosine in DNA + S-adenosyl-L-methionine = an N(6)-methyl-2'-deoxyadenosine in DNA + S-adenosyl-L-homocysteine + H(+). Functionally, a gamma subtype methylase, recognizes the double-stranded sequence 5'-TCGA-3', methylates A-4 on both strands and protects the DNA from cleavage by the TthHB8I endonuclease. The chain is Type II methyltransferase M.TthHB8I from Thermus thermophilus (strain ATCC 27634 / DSM 579 / HB8).